Reading from the N-terminus, the 334-residue chain is Meso-diaminopimelate D-dehydrogenase (334 aa).

NADP(+) contacts are provided by residues 16 to 19 (YGNL), 40 to 42 (TRR), 75 to 78 (CSGS), 98 to 100 (GFD), and 127 to 131 (CGWDP). Residues aspartate 100, aspartate 130, tryptophan 154, 160–161 (QG), threonine 179, arginine 205, histidine 255, and asparagine 284 each bind substrate.

It belongs to the diaminopimelate dehydrogenase family. As to quaternary structure, homodimer.

The catalysed reaction is meso-2,6-diaminopimelate + NADP(+) + H2O = (S)-2-amino-6-oxoheptanedioate + NH4(+) + NADPH + H(+). The protein operates within amino-acid biosynthesis; L-lysine biosynthesis via DAP pathway; DL-2,6-diaminopimelate from (S)-tetrahydrodipicolinate: step 1/1. In terms of biological role, catalyzes the reversible NADPH-dependent reductive amination of L-2-amino-6-oxopimelate, the acyclic form of L-tetrahydrodipicolinate, to generate the meso compound, D,L-2,6-diaminopimelate. Probably plays a role in lysine biosynthesis. Exhibits a high substrate specificity for meso-2,6-diaminopimelate (m-DAP), since the activity with L,L-2,6-diaminopimelate is less than 5% of the activity observed with m-DAP. Can use NAD(+) only very poorly since the activity observed in the presence of NAD(+) is about 0.3% of that with NADP(+). This chain is Meso-diaminopimelate D-dehydrogenase (ddh), found in Acetivibrio thermocellus (strain ATCC 27405 / DSM 1237 / JCM 9322 / NBRC 103400 / NCIMB 10682 / NRRL B-4536 / VPI 7372) (Clostridium thermocellum).